The chain runs to 475 residues: Methyltransferase-like protein 25B (475 aa).

Positions 185–210 (NKRLVARAQRLDQELLQALDKMEKRH) form a coiled coil. Residues 406-426 (VVAFFSLALLLAPLVETLILL) form a helical membrane-spanning segment.

It belongs to the METTL25 family.

It is found in the membrane. This chain is Methyltransferase-like protein 25B, found in Rattus norvegicus (Rat).